The sequence spans 403 residues: Phosphopentomutase (403 aa).

Mn(2+) contacts are provided by D13, D298, H303, D339, H340, and H351.

This sequence belongs to the phosphopentomutase family. Mn(2+) is required as a cofactor.

Its subcellular location is the cytoplasm. It carries out the reaction 2-deoxy-alpha-D-ribose 1-phosphate = 2-deoxy-D-ribose 5-phosphate. It catalyses the reaction alpha-D-ribose 1-phosphate = D-ribose 5-phosphate. It participates in carbohydrate degradation; 2-deoxy-D-ribose 1-phosphate degradation; D-glyceraldehyde 3-phosphate and acetaldehyde from 2-deoxy-alpha-D-ribose 1-phosphate: step 1/2. Functionally, isomerase that catalyzes the conversion of deoxy-ribose 1-phosphate (dRib-1-P) and ribose 1-phosphate (Rib-1-P) to deoxy-ribose 5-phosphate (dRib-5-P) and ribose 5-phosphate (Rib-5-P), respectively. In Streptococcus thermophilus, this protein is Phosphopentomutase.